Reading from the N-terminus, the 213-residue chain is 3-demethoxyubiquinol 3-hydroxylase (213 aa).

E62, E92, H95, E144, E176, and H179 together coordinate Fe cation.

The protein belongs to the COQ7 family. It depends on Fe cation as a cofactor.

It is found in the cell membrane. The enzyme catalyses a 5-methoxy-2-methyl-3-(all-trans-polyprenyl)benzene-1,4-diol + AH2 + O2 = a 3-demethylubiquinol + A + H2O. It functions in the pathway cofactor biosynthesis; ubiquinone biosynthesis. Its function is as follows. Catalyzes the hydroxylation of 2-nonaprenyl-3-methyl-6-methoxy-1,4-benzoquinol during ubiquinone biosynthesis. In Legionella pneumophila (strain Paris), this protein is 3-demethoxyubiquinol 3-hydroxylase.